The following is a 153-amino-acid chain: Large ribosomal subunit protein uL22 (153 aa).

It belongs to the universal ribosomal protein uL22 family. Part of the 50S ribosomal subunit.

Functionally, this protein binds specifically to 23S rRNA. It makes multiple contacts with different domains of the 23S rRNA in the assembled 50S subunit and ribosome. In terms of biological role, the globular domain of the protein is located near the polypeptide exit tunnel on the outside of the subunit, while an extended beta-hairpin is found that lines the wall of the exit tunnel in the center of the 70S ribosome. The chain is Large ribosomal subunit protein uL22 from Methanococcus maripaludis (strain DSM 14266 / JCM 13030 / NBRC 101832 / S2 / LL).